The chain runs to 686 residues: Methionine--tRNA ligase (686 aa).

The 'HIGH' region motif lies at 15–25; it reads PYANGSIHLGH. Zn(2+)-binding residues include Cys146, Cys149, Cys159, and Cys162. The short motif at 332–336 is the 'KMSKS' region element; sequence KMSKS. Lys335 contributes to the ATP binding site. Positions 585 to 686 constitute a tRNA-binding domain; it reads AFEAVDMRIA…EGAQPGMRVM (102 aa).

The protein belongs to the class-I aminoacyl-tRNA synthetase family. MetG type 1 subfamily. Homodimer. It depends on Zn(2+) as a cofactor.

It is found in the cytoplasm. The catalysed reaction is tRNA(Met) + L-methionine + ATP = L-methionyl-tRNA(Met) + AMP + diphosphate. Functionally, is required not only for elongation of protein synthesis but also for the initiation of all mRNA translation through initiator tRNA(fMet) aminoacylation. The chain is Methionine--tRNA ligase from Aliivibrio fischeri (strain ATCC 700601 / ES114) (Vibrio fischeri).